Reading from the N-terminus, the 321-residue chain is Phosphatidate cytidylyltransferase, mitochondrial (321 aa).

Belongs to the TAM41 family. Mg(2+) is required as a cofactor. It depends on Co(2+) as a cofactor. Cu(2+) serves as cofactor.

It localises to the mitochondrion inner membrane. It carries out the reaction a 1,2-diacyl-sn-glycero-3-phosphate + CTP + H(+) = a CDP-1,2-diacyl-sn-glycerol + diphosphate. It functions in the pathway phospholipid metabolism; CDP-diacylglycerol biosynthesis; CDP-diacylglycerol from sn-glycerol 3-phosphate: step 3/3. Its function is as follows. Catalyzes the formation of CDP-diacylglycerol (CDP-DAG) from phosphatidic acid (PA) in the mitochondrial inner membrane. Required for the biosynthesis of the dimeric phospholipid cardiolipin, which stabilizes supercomplexes of the mitochondrial respiratory chain in the mitochondrial inner membrane. The protein is Phosphatidate cytidylyltransferase, mitochondrial of Caenorhabditis elegans.